Here is a 513-residue protein sequence, read N- to C-terminus: Protein phosphatase 1H (513 aa).

At Ser-7 the chain carries Phosphoserine. The 430-residue stretch at 77 to 506 (ATGYAEVINA…DDISVYVIPL (430 aa)) folds into the PPM-type phosphatase domain. The disordered stretch occupies residues 110–133 (ITSTPNRNSKRRSSLPNGEGLQLK). Thr-113 carries the phosphothreonine modification. 2 positions are modified to phosphoserine: Ser-123 and Ser-210. Residue Arg-212 is modified to Omega-N-methylarginine. Residue Ser-220 is modified to Phosphoserine. Thr-223 carries the phosphothreonine modification. A Phosphoserine modification is found at Ser-421.

This sequence belongs to the PP2C family.

The protein localises to the nucleus. Its subcellular location is the cytoplasm. It catalyses the reaction O-phospho-L-seryl-[protein] + H2O = L-seryl-[protein] + phosphate. It carries out the reaction O-phospho-L-threonyl-[protein] + H2O = L-threonyl-[protein] + phosphate. Its function is as follows. Dephosphorylates CDKN1B at 'Thr-187', thus removing a signal for proteasomal degradation. The protein is Protein phosphatase 1H (Ppm1h) of Rattus norvegicus (Rat).